The sequence spans 608 residues: Malonate--CoA ligase (608 aa).

The protein belongs to the ATP-dependent AMP-binding enzyme family. Expressed in flowers.

It localises to the cytoplasm. The protein resides in the nucleus. It catalyses the reaction malonate + ATP + CoA = malonyl-CoA + AMP + diphosphate. In terms of biological role, malonate--CoA ligase that catalyzes the formation of malonyl-CoA directly from malonate and CoA. May be required for the detoxification of malonate. The chain is Malonate--CoA ligase (AAE13) from Arabidopsis thaliana (Mouse-ear cress).